The primary structure comprises 791 residues: Sphingomyelin phosphodiesterase 4 (791 aa).

Residues 755-775 (LFALLSFGLFSSTGLILIISF) form a helical membrane-spanning segment.

It depends on Mg(2+) as a cofactor.

The protein resides in the endoplasmic reticulum membrane. It localises to the golgi apparatus membrane. The protein localises to the nucleus envelope. It is found in the cell membrane. Its subcellular location is the sarcolemma. The enzyme catalyses a sphingomyelin + H2O = phosphocholine + an N-acylsphing-4-enine + H(+). Its function is as follows. Catalyzes the hydrolysis of membrane sphingomyelin to form phosphorylcholine and ceramide. It has a relevant role in the homeostasis of membrane sphingolipids, thereby influencing membrane integrity, and endoplasmic reticulum organization and function. May sensitize cells to DNA damage-induced apoptosis. This Danio rerio (Zebrafish) protein is Sphingomyelin phosphodiesterase 4 (smpd4).